The primary structure comprises 358 residues: DNA integrity scanning protein DisA (358 aa).

The 139-residue stretch at 9–147 (KQDLSEILQF…ENMKYILKDI (139 aa)) folds into the DAC domain. Residues glycine 76, leucine 94, and 107 to 111 (MRHRT) each bind ATP.

It belongs to the DisA family. In terms of assembly, homooctamer. The cofactor is Mg(2+).

It carries out the reaction 2 ATP = 3',3'-c-di-AMP + 2 diphosphate. Functionally, participates in a DNA-damage check-point that is active prior to asymmetric division when DNA is damaged. DisA forms globular foci that rapidly scan along the chromosomes during sporulation, searching for lesions. When a lesion is present, DisA pauses at the lesion site. This triggers a cellular response that culminates in a temporary block in sporulation initiation. Its function is as follows. Also has diadenylate cyclase activity, catalyzing the condensation of 2 ATP molecules into cyclic di-AMP (c-di-AMP). c-di-AMP acts as a signaling molecule that couples DNA integrity with progression of sporulation. The rise in c-di-AMP level generated by DisA while scanning the chromosome, operates as a positive signal that advances sporulation; upon encountering a lesion, the DisA focus arrests at the damaged site and halts c-di-AMP synthesis. The chain is DNA integrity scanning protein DisA from Bacillus licheniformis (strain ATCC 14580 / DSM 13 / JCM 2505 / CCUG 7422 / NBRC 12200 / NCIMB 9375 / NCTC 10341 / NRRL NRS-1264 / Gibson 46).